Here is a 1687-residue protein sequence, read N- to C-terminus: A-kinase anchor protein 12 (1687 aa).

Positions 1–108 (MGAGSSTEQR…EKDRVEEMAA (108 aa)) are disordered. A lipid anchor (N-myristoyl glycine) is attached at Gly-2. 4 positions are modified to phosphoserine: Ser-11, Ser-18, Ser-22, and Ser-27. The segment covering 30 to 48 (GPAAEASGAAGDPADADPA) has biased composition (low complexity). Positions 52-62 (PQKNGQLSTVN) are enriched in polar residues. A compositionally biased stretch (acidic residues) spans 75–88 (ENQEGQEEEVVDED). Basic and acidic residues predominate over residues 89–105 (VGQRESEDVREKDRVEE). Residues Ser-136 and Ser-204 each carry the phosphoserine modification. Disordered regions lie at residues 175–282 (SDTV…ETTS) and 298–355 (KTSF…DYEK). Over residues 213–230 (ASKESELKQSTEKQEGTL) the composition is skewed to basic and acidic residues. 2 positions are modified to phosphoserine: Ser-235 and Ser-245. Positions 247–259 (QAAEEEAKDEGEE) are enriched in acidic residues. An involved in PKC-binding region spans residues 254–544 (KDEGEEKQEK…QHIHTESPES (291 aa)). Phosphoserine occurs at positions 268, 271, 274, and 304. The span at 268-282 (SPESPSSPVSSETTS) shows a compositional bias: low complexity. The segment covering 303–321 (KSKEDDLETAEKRKEQEAE) has biased composition (basic and acidic residues). A Phosphothreonine modification is found at Thr-331. Acidic residues predominate over residues 334–344 (ASEEQEPAEDT). 2 positions are modified to phosphoserine: Ser-335 and Ser-350. At Tyr-353 the chain carries Phosphotyrosine. Phosphoserine is present on Ser-371. A disordered region spans residues 402–481 (VEKTEEEQGG…EKTLPKHPEG (80 aa)). The segment covering 417–426 (GGVVVEGTGE) has biased composition (low complexity). Ser-469 carries the phosphoserine modification. The segment covering 470-480 (PEEKTLPKHPE) has biased composition (basic and acidic residues). Phosphoserine is present on residues Ser-491, Ser-507, and Ser-509. A disordered region spans residues 496 to 828 (KVQGSPLKKL…INEDDPDVPA (333 aa)). Residues 499–513 (GSPLKKLFSSSGLKK) are compositionally biased toward low complexity. Positions 514–523 (LSGKKQKGKR) are enriched in basic residues. Over residues 533 to 550 (EYQHIHTESPESADEQKG) the composition is skewed to basic and acidic residues. Residues Ser-541, Ser-544, Ser-585, Ser-599, Ser-614, and Ser-616 each carry the phosphoserine modification. The AKAP CaM-binding 1 signature appears at 594-614 (ITPWASFKKMVTPKKRVRRPS). Residues 612 to 626 (RPSESDKEEELEKVK) are compositionally biased toward basic and acidic residues. The span at 628–639 (ATLSSTDSTVSE) shows a compositional bias: polar residues. Thr-629 is modified (phosphothreonine). 4 positions are modified to phosphoserine: Ser-631, Ser-632, Ser-635, and Ser-638. The segment covering 642 to 661 (DEVKTVGEEQKPEEPKRRVD) has biased composition (basic and acidic residues). 3 positions are modified to phosphoserine: Ser-683, Ser-684, and Ser-685. Positions 697–711 (DSHRAEEASKDKEAG) are enriched in basic and acidic residues. Positions 717–726 (ASTQEQDQAQ) are enriched in polar residues. The span at 727 to 744 (GSSSPEPAGSPSEGEGVS) shows a compositional bias: low complexity. Ser-736, Ser-748, Ser-770, Ser-771, and Ser-789 each carry phosphoserine. Positions 743–763 (VSTWESFKRLVTPRKKSKSKL) match the AKAP CaM-binding 2 motif. The AKAP CaM-binding 3 signature appears at 784 to 804 (EESWVSIKKFIPGRRKKRADG). Thr-871 carries the phosphothreonine modification. At Ser-873 the chain carries Phosphoserine. The interval 959–981 (ETSEALRTEEVTEASGAEETTDM) is disordered. Residue Lys-1030 forms a Glycyl lysine isopeptide (Lys-Gly) (interchain with G-Cter in SUMO1) linkage. The segment covering 1035 to 1045 (VPATQTVQRTG) has biased composition (polar residues). 4 disordered regions span residues 1035 to 1105 (VPAT…EVTA), 1125 to 1221 (AVAP…LAAA), 1277 to 1361 (CQEK…QDKA), and 1443 to 1487 (TPAP…TAIE). Ser-1059 carries the post-translational modification Phosphoserine. The span at 1130-1157 (SSETLTDSETNGSTPLADSDTADGTQQD) shows a compositional bias: polar residues. A compositionally biased stretch (basic and acidic residues) spans 1199–1211 (QEEHGEEPGRDVL). Ser-1289 is subject to Phosphoserine. Residues 1298–1310 (DVEKEKRETKPEQ) show a composition bias toward basic and acidic residues. A phosphoserine mark is found at Ser-1348, Ser-1352, and Ser-1354. Residues 1462-1487 (QRERSEEEDKPDAGPDADGKESTAIE) are compositionally biased toward basic and acidic residues. An RII-binding region spans residues 1498–1511 (ELESKSNKIVLNVI). Disordered stretches follow at residues 1522–1582 (ETAP…GSAS) and 1599–1687 (IEKL…LAES). Residues 1530-1547 (YDSQTQVPAMQADSQGAQ) are compositionally biased toward polar residues. A phosphoserine mark is found at Ser-1543 and Ser-1571. Low complexity predominate over residues 1618-1630 (QLQSLAQAEASAS). Residue Ser-1637 is modified to Phosphoserine. Basic and acidic residues predominate over residues 1645–1687 (LTEEGDAPKVEVQEEEMSTKSVKENKAQAEEDLQEPKGDLAES).

Binds to dimeric RII-alpha regulatory subunit of PKC. In terms of processing, phosphorylated by PKC (in vitro).

Its subcellular location is the cytoplasm. It is found in the cytoskeleton. The protein localises to the membrane. Its function is as follows. Anchoring protein that mediates the subcellular compartmentation of protein kinase A (PKA) and protein kinase C (PKC). The sequence is that of A-kinase anchor protein 12 (Akap12) from Rattus norvegicus (Rat).